Consider the following 361-residue polypeptide: Phospho-N-acetylmuramoyl-pentapeptide-transferase (361 aa).

A run of 10 helical transmembrane segments spans residues 21-41 (YLTV…LWIG), 74-94 (MGGI…ANLA), 97-117 (YVWF…VDDY), 132-152 (WKYF…YAIG), 168-188 (VMPQ…VGTG), 199-219 (GLAI…AWAT), 239-259 (LVIF…FNTY), 264-284 (FMGD…AVLV), 288-308 (FLLV…ILQV), and 339-359 (VIIR…ITLK).

Belongs to the glycosyltransferase 4 family. MraY subfamily. Mg(2+) is required as a cofactor.

The protein localises to the cell inner membrane. The catalysed reaction is UDP-N-acetyl-alpha-D-muramoyl-L-alanyl-gamma-D-glutamyl-meso-2,6-diaminopimeloyl-D-alanyl-D-alanine + di-trans,octa-cis-undecaprenyl phosphate = di-trans,octa-cis-undecaprenyl diphospho-N-acetyl-alpha-D-muramoyl-L-alanyl-D-glutamyl-meso-2,6-diaminopimeloyl-D-alanyl-D-alanine + UMP. It functions in the pathway cell wall biogenesis; peptidoglycan biosynthesis. Its function is as follows. Catalyzes the initial step of the lipid cycle reactions in the biosynthesis of the cell wall peptidoglycan: transfers peptidoglycan precursor phospho-MurNAc-pentapeptide from UDP-MurNAc-pentapeptide onto the lipid carrier undecaprenyl phosphate, yielding undecaprenyl-pyrophosphoryl-MurNAc-pentapeptide, known as lipid I. The sequence is that of Phospho-N-acetylmuramoyl-pentapeptide-transferase from Histophilus somni (strain 129Pt) (Haemophilus somnus).